Reading from the N-terminus, the 501-residue chain is Sodium-coupled neutral amino acid symporter 2 (501 aa).

Positions 1–26 (MSSAEMGKFDISPDEDSSSYSSNSND) are disordered. At 1-77 (MSSAEMGKFD…HPGTTSFGMS (77 aa)) the chain is on the cytoplasmic side. A regulates protein turnover upon amino acid deprivation region spans residues 1-97 (MSSAEMGKFD…SGILGLSYAM (97 aa)). A helical transmembrane segment spans residues 78 to 97 (VFNLSNAIVGSGILGLSYAM). A Na(+)-binding site is contributed by Asn83. Topologically, residues 98–103 (ANTGIA) are extracellular. A helical membrane pass occupies residues 104-124 (LFVILLLVVSILSLYSVHLLL). Topologically, residues 125–159 (KTANEGGSLLYEQLGMKAFGMPGKLAASGSITMQN) are cytoplasmic. A helical transmembrane segment spans residues 160–178 (IGAMSSYLFIVKYELPLVI). Residues 179–189 (KTFMNIEENAG) lie on the Extracellular side of the membrane. The helical transmembrane segment at 190 to 210 (HWYLNGDYLVLLVSVILILPL) threads the bilayer. The Cytoplasmic segment spans residues 211 to 218 (SLLKNLGY). The helical transmembrane segment at 219–239 (LGYTSGFSLLCMVFFLIVVIW) threads the bilayer. Residues 240–287 (KMFQIPCPMESDIINATLINATLAPFADENITISDACKPEYFIFNSQT) are Extracellular-facing. An intrachain disulfide couples Cys246 to Cys276. Residues Asn254 and Asn259 are each glycosylated (N-linked (GlcNAc...) asparagine). Residues 288 to 308 (VYAVPILTFSFVCHPAILPIY) form a helical membrane-spanning segment. Topologically, residues 309-324 (EELKSRSRKRMMNVSY) are cytoplasmic. Residues 325–345 (VSFFAMFLMYLLAALFGYLTF) traverse the membrane as a helical segment. Residues 346 to 366 (YGRVESELLHTYSAFLGADIL) lie on the Extracellular side of the membrane. A helical membrane pass occupies residues 367–387 (LLIVRLAVLMAVTLTVPVVIF). A Na(+)-binding site is contributed by Thr381. Residues 388 to 408 (PIRSSVTQLLWAGKEFSWWRH) are Cytoplasmic-facing. The helical transmembrane segment at 409 to 429 (CSITVVLLAFTNVLVIFVPTI) threads the bilayer. The Extracellular portion of the chain corresponds to 430 to 431 (RD). A helical membrane pass occupies residues 432 to 452 (IFGFIGASAAAMLIFILPSAF). The Cytoplasmic segment spans residues 453–467 (YIKLVKKEPMKSVQK). Residues 468-490 (IGAALFFLSGILVMTGCMTLIIL) form a helical membrane-spanning segment. At 491-501 (DWIHTDASDGH) the chain is on the extracellular side.

This sequence belongs to the amino acid/polyamine transporter 2 family.

The protein localises to the cell membrane. It carries out the reaction L-alanine(in) + Na(+)(in) = L-alanine(out) + Na(+)(out). The enzyme catalyses glycine(in) + Na(+)(in) = glycine(out) + Na(+)(out). It catalyses the reaction L-serine(in) + Na(+)(in) = L-serine(out) + Na(+)(out). The catalysed reaction is L-proline(in) + Na(+)(in) = L-proline(out) + Na(+)(out). It carries out the reaction L-methionine(in) + Na(+)(in) = L-methionine(out) + Na(+)(out). The enzyme catalyses L-histidine(in) + Na(+)(in) = L-histidine(out) + Na(+)(out). It catalyses the reaction L-asparagine(in) + Na(+)(in) = L-asparagine(out) + Na(+)(out). The catalysed reaction is L-glutamine(in) + Na(+)(in) = L-glutamine(out) + Na(+)(out). It carries out the reaction L-threonine(in) + Na(+)(in) = L-threonine(out) + Na(+)(out). The enzyme catalyses L-leucine(in) + Na(+)(in) = L-leucine(out) + Na(+)(out). It catalyses the reaction L-phenylalanine(in) + Na(+)(in) = L-phenylalanine(out) + Na(+)(out). Inhibited by N-methyl-D-glucamine. Inhibited by choline. Allosteric regulation of sodium ions binding by pH. Symporter that cotransports neutral amino acids and sodium ions from the extracellular to the intracellular side of the cell membrane. The transport is pH-sensitive, Li(+)-intolerant, electrogenic, driven by the Na(+) electrochemical gradient and cotransports of neutral amino acids and sodium ions with a stoichiometry of 1:1. The sequence is that of Sodium-coupled neutral amino acid symporter 2 from Gallus gallus (Chicken).